The following is a 103-amino-acid chain: Small ribosomal subunit protein uS14c (103 aa).

Residues 27–56 (SKKKIRSKVSPLSLSEKTKMQEKLQSLPRN) are disordered.

It belongs to the universal ribosomal protein uS14 family. Part of the 30S ribosomal subunit.

The protein localises to the plastid. It localises to the chloroplast. Functionally, binds 16S rRNA, required for the assembly of 30S particles. This is Small ribosomal subunit protein uS14c from Zea mays (Maize).